A 245-amino-acid polypeptide reads, in one-letter code: MNLRAFLLSAVAALVAVQAEVTYIDHDTVKPFPQPKPKTDSEKAAVKYKPQLLVSYGCHPYPAVQADGSVSAGLKGTGPAAGECGGSALGSQVYSRSDWYKDKWAIMYSWYLPKGRPAKYQRRHLWETAVVWIDDPSLANSTILGVSLNYGWRHKTMAPIESEFLDDSRVKLESYRGFSYPRPKLRFTTHVGETQDLITWEQLTVEAREALSNAEFDSGLIKTTRREMPLKDGVFEKRLKDAWPF.

An N-terminal signal peptide occupies residues 1–19 (MNLRAFLLSAVAALVAVQA). Positions 121–127 (QRRHLWE) match the Hepta-peptide GHRHDWE motif motif. Asn140 carries an N-linked (GlcNAc...) asparagine glycan.

The protein belongs to the Necrosis inducing protein (NPP1) family.

It is found in the secreted. Secreted effector that contributes strongly to virulence during infection by P.capsici. The protein is NLP effector protein Pc118551 of Phytophthora capsici.